Here is a 60-residue protein sequence, read N- to C-terminus: Large ribosomal subunit protein bL32 (60 aa).

The interval 1 to 60 (MAVQQNKKSPSKRGMHRSHDFLVNPSTAIEPTTGETHLRHHISPNGFYRGRKVLKTKADE) is disordered. Residues 24–35 (NPSTAIEPTTGE) are compositionally biased toward polar residues. The segment covering 49–60 (RGRKVLKTKADE) has biased composition (basic residues).

Belongs to the bacterial ribosomal protein bL32 family.

This chain is Large ribosomal subunit protein bL32, found in Bordetella petrii (strain ATCC BAA-461 / DSM 12804 / CCUG 43448).